An 837-amino-acid polypeptide reads, in one-letter code: Putative dimethyl sulfoxide reductase catalytic subunit A (837 aa).

Residues 1 to 36 (MSDTDLNATRRDVLKSGAVAAVGLSGGGLLSTLQEA) constitute a signal peptide (tat-type signal). A 4Fe-4S Mo/W bis-MGD-type domain is found at 53–110 (DQVVKTACSPNCRGKCPLDVFVRDGQIKKVEQQVPAAKTFKRGCTLGMTHLQRVYNAD). [4Fe-4S] cluster is bound by residues Cys-60, Cys-64, Cys-68, and Cys-96. Asn-200 contributes to the Mo-bis(molybdopterin guanine dinucleotide) binding site. The disordered stretch occupies residues 813–837 (EHQSNEYTQHNPRGSSGTATDGDSS). Residues 826-837 (GSSGTATDGDSS) show a composition bias toward low complexity.

Belongs to the prokaryotic molybdopterin-containing oxidoreductase family. Probable multiprotein complex that likely consists of DmsA, DmsB and DmsC. It depends on Mo-bis(molybdopterin guanine dinucleotide) as a cofactor. [4Fe-4S] cluster serves as cofactor. In terms of processing, predicted to be exported by the Tat system. The position of the signal peptide cleavage has not been experimentally proven.

Its subcellular location is the cell membrane. The catalysed reaction is dimethyl sulfide + a menaquinone + H2O = dimethyl sulfoxide + a menaquinol. In terms of biological role, dimethyl sulfoxide (DMSO) reductase catalyzes the reduction of dimethyl sulfoxide (DMSO) to dimethyl sulfide (DMS) during anaerobic respiration; it can also use trimethylamine N-oxide (TMAO) as terminal electron acceptor. Required for anaerobic respiration on DMSO and TMAO; subunit A is proposed to be catalytically active. The polypeptide is Putative dimethyl sulfoxide reductase catalytic subunit A (dmsA) (Halobacterium salinarum (strain ATCC 700922 / JCM 11081 / NRC-1) (Halobacterium halobium)).